The primary structure comprises 110 residues: NADH-quinone oxidoreductase subunit K (110 aa).

Helical transmembrane passes span 7–27 (LGSY…GVFV), 31–51 (IIAI…NFIA), and 73–93 (IFVI…VIAI).

The protein belongs to the complex I subunit 4L family. NDH-1 is composed of 14 different subunits. Subunits NuoA, H, J, K, L, M, N constitute the membrane sector of the complex.

It is found in the cell membrane. The catalysed reaction is a quinone + NADH + 5 H(+)(in) = a quinol + NAD(+) + 4 H(+)(out). In terms of biological role, NDH-1 shuttles electrons from NADH, via FMN and iron-sulfur (Fe-S) centers, to quinones in the respiratory chain. The immediate electron acceptor for the enzyme in this species is believed to be a menaquinone. Couples the redox reaction to proton translocation (for every two electrons transferred, four hydrogen ions are translocated across the cytoplasmic membrane), and thus conserves the redox energy in a proton gradient. The sequence is that of NADH-quinone oxidoreductase subunit K from Desulfitobacterium hafniense (strain DSM 10664 / DCB-2).